The chain runs to 509 residues: 2,3-bisphosphoglycerate-independent phosphoglycerate mutase (509 aa).

Asp-11 serves as a coordination point for Mn(2+). Tyr-35 carries the post-translational modification Phosphotyrosine. Ser-61 lines the Mn(2+) pocket. Catalysis depends on Ser-61, which acts as the Phosphoserine intermediate. Residues His-122, 152–153 (RD), Arg-184, Arg-190, 260–263 (RPDR), and Lys-335 each bind substrate. Asp-402, His-406, Asp-443, His-444, and His-461 together coordinate Mn(2+).

This sequence belongs to the BPG-independent phosphoglycerate mutase family. As to quaternary structure, monomer. The cofactor is Mn(2+).

The catalysed reaction is (2R)-2-phosphoglycerate = (2R)-3-phosphoglycerate. It functions in the pathway carbohydrate degradation; glycolysis; pyruvate from D-glyceraldehyde 3-phosphate: step 3/5. In terms of biological role, essential for rapid growth and for sporulation. Catalyzes the interconversion of 2-phosphoglycerate and 3-phosphoglycerate. The chain is 2,3-bisphosphoglycerate-independent phosphoglycerate mutase from Bacillus anthracis.